The chain runs to 339 residues: Basic membrane protein A (339 aa).

A signal peptide spans 1–17 (MNKILLLILLESIVFLS). Cys18 carries the N-palmitoyl cysteine lipid modification. A lipid anchor (S-diacylglycerol cysteine) is attached at Cys18.

It belongs to the BMP lipoprotein family. As to quaternary structure, monomer.

It is found in the cell inner membrane. Functionally, immunogenic protein. May be part of an ABC-type nucleoside uptake system involved in the purine salvage pathway. The protein is Basic membrane protein A (bmpA) of Borreliella burgdorferi (strain ATCC 35210 / DSM 4680 / CIP 102532 / B31) (Borrelia burgdorferi).